We begin with the raw amino-acid sequence, 209 residues long: Guanylate kinase (209 aa).

The Guanylate kinase-like domain maps to 8–186 (GVLYIVSAPS…ALQDLVAITR (179 aa)). ATP is bound at residue 15 to 22 (APSGAGKT).

It belongs to the guanylate kinase family.

The protein localises to the cytoplasm. It catalyses the reaction GMP + ATP = GDP + ADP. Functionally, essential for recycling GMP and indirectly, cGMP. This is Guanylate kinase from Thiobacillus denitrificans (strain ATCC 25259 / T1).